The sequence spans 178 residues: Large ribosomal subunit protein uL10 (178 aa).

It belongs to the universal ribosomal protein uL10 family. In terms of assembly, part of the ribosomal stalk of the 50S ribosomal subunit. The N-terminus interacts with L11 and the large rRNA to form the base of the stalk. The C-terminus forms an elongated spine to which L12 dimers bind in a sequential fashion forming a multimeric L10(L12)X complex.

In terms of biological role, forms part of the ribosomal stalk, playing a central role in the interaction of the ribosome with GTP-bound translation factors. The sequence is that of Large ribosomal subunit protein uL10 from Stenotrophomonas maltophilia (strain R551-3).